A 567-amino-acid polypeptide reads, in one-letter code: Major facilitator superfamily transporter MG061 (567 aa).

12 helical membrane passes run 15 to 35 (ITLW…WFVI), 78 to 98 (WTIT…VLKF), 104 to 124 (VLIM…GDPL), 193 to 213 (GYAL…TLVV), 230 to 250 (ILSN…FTPF), 264 to 284 (VYIM…FLWF), 321 to 341 (LIGV…PAWF), 363 to 383 (TGLA…FVVF), 405 to 425 (IVVL…SAAG), 426 to 446 (FALI…LSSS), 462 to 482 (LPIL…LFDI), and 503 to 523 (PGVI…NLIV).

It belongs to the major facilitator superfamily.

It is found in the cell membrane. This is Major facilitator superfamily transporter MG061 from Mycoplasma genitalium (strain ATCC 33530 / DSM 19775 / NCTC 10195 / G37) (Mycoplasmoides genitalium).